Here is a 642-residue protein sequence, read N- to C-terminus: Chaperone protein DnaK (642 aa).

Thr200 is subject to Phosphothreonine; by autocatalysis. The segment covering 603 to 623 has biased composition (low complexity); that stretch reads AAAAEQGGNADAASGNAQASK. The segment at 603–627 is disordered; that stretch reads AAAAEQGGNADAASGNAQASKAADD.

The protein belongs to the heat shock protein 70 family.

Acts as a chaperone. In Xanthomonas campestris pv. campestris (strain B100), this protein is Chaperone protein DnaK.